Here is a 440-residue protein sequence, read N- to C-terminus: Methylenetetrahydrofolate--tRNA-(uracil-5-)-methyltransferase TrmFO (440 aa).

14-19 (GAGLAG) lines the FAD pocket.

This sequence belongs to the MnmG family. TrmFO subfamily. Requires FAD as cofactor.

It localises to the cytoplasm. The catalysed reaction is uridine(54) in tRNA + (6R)-5,10-methylene-5,6,7,8-tetrahydrofolate + NADH + H(+) = 5-methyluridine(54) in tRNA + (6S)-5,6,7,8-tetrahydrofolate + NAD(+). The enzyme catalyses uridine(54) in tRNA + (6R)-5,10-methylene-5,6,7,8-tetrahydrofolate + NADPH + H(+) = 5-methyluridine(54) in tRNA + (6S)-5,6,7,8-tetrahydrofolate + NADP(+). Its function is as follows. Catalyzes the folate-dependent formation of 5-methyl-uridine at position 54 (M-5-U54) in all tRNAs. The sequence is that of Methylenetetrahydrofolate--tRNA-(uracil-5-)-methyltransferase TrmFO from Bdellovibrio bacteriovorus (strain ATCC 15356 / DSM 50701 / NCIMB 9529 / HD100).